The primary structure comprises 891 residues: Major core protein OPG136 precursor (891 aa).

Positions 615-697 (SPEGEETIIC…ILDRIITNAG (83 aa)) are excised as a propeptide.

This sequence belongs to the orthopxvirus protein OPG136 family. In terms of assembly, interacts with P39/A4. The precursor is cleaved by OPG083 to give rise to the 62 kDa mature protein during virion maturation. Proteolytic cleavage of major core proteins OPG136, OPG129, and OPG098, which occurs at a late stage of core formation, is required for production of infectious mature virions (MV).

It is found in the virion. Functionally, core protein 4a is the most abundant virion protein. Major component of the virion core that undergoes proteolytic processing during the immature virion (IV) to mature virion (MV) transition. This Cynomys gunnisoni (Gunnison's prairie dog) protein is Major core protein OPG136 precursor (OPG136).